Here is a 406-residue protein sequence, read N- to C-terminus: Tryptophan 2,3-dioxygenase A (406 aa).

Substrate-binding positions include 71-75 and R143; that span reads FIVTH. H327 lines the heme pocket. T341 lines the substrate pocket.

Belongs to the tryptophan 2,3-dioxygenase family. Homotetramer. Dimer of dimers. It depends on heme as a cofactor.

It catalyses the reaction L-tryptophan + O2 = N-formyl-L-kynurenine. The protein operates within amino-acid degradation; L-tryptophan degradation via kynurenine pathway; L-kynurenine from L-tryptophan: step 1/2. Its function is as follows. Heme-dependent dioxygenase that catalyzes the oxidative cleavage of the L-tryptophan (L-Trp) pyrrole ring and converts L-tryptophan to N-formyl-L-kynurenine. Catalyzes the oxidative cleavage of the indole moiety. This is Tryptophan 2,3-dioxygenase A from Danio rerio (Zebrafish).